The chain runs to 371 residues: Opsin Rh1 (371 aa).

Topologically, residues 1–47 are extracellular; sequence MERYSTPLIGPSFAALTNGSVTDKVTPDMAHLVHPYWNQFPAMEPKW. Asn-18 carries N-linked (GlcNAc...) asparagine glycosylation. Residues 48–72 traverse the membrane as a helical segment; it reads AKFLAAYMVLIATISWCGNGVVIYI. The Cytoplasmic segment spans residues 73–84; the sequence is FSTTKSLRTPAN. The helical transmembrane segment at 85-110 threads the bilayer; the sequence is LLVINLAISDFGIMITNTPMMGINLF. Residues 111–124 are Extracellular-facing; it reads YETWVLGPLMCDIY. Cys-121 and Cys-198 are disulfide-bonded. Residues 125-144 form a helical membrane-spanning segment; sequence GGLGSAFGCSSILSMCMISL. At 145-163 the chain is on the cytoplasmic side; sequence DRYNVIVKGMAGQPMTIKL. Residues 164 to 187 form a helical membrane-spanning segment; the sequence is AIMKIALIWFMASIWTLAPVFGWS. Over 188–211 the chain is Extracellular; that stretch reads RYVPEGNLTSCGIDYLERDWNPRS. Residues 212 to 239 traverse the membrane as a helical segment; sequence YLIFYSIFVYYLPLFLICYSYWFIIAAV. At 240 to 274 the chain is on the cytoplasmic side; that stretch reads SAHEKAMREQAKKMNVKSLRSSEDADKSAEGKLAK. Residues 275-298 form a helical membrane-spanning segment; the sequence is VALVTISLWFMAWTPYTIINTLGL. Topologically, residues 299–305 are extracellular; that stretch reads FKYEGLT. A helical membrane pass occupies residues 306 to 330; sequence PLNTIWGACFAKSAACYNPIVYGIS. Lys-317 bears the N6-(retinylidene)lysine mark. At 331–371 the chain is on the cytoplasmic side; sequence HPKYGIALKEKCPCCVFGKVDDGKASDATSQATNNESETKA.

It belongs to the G-protein coupled receptor 1 family. Opsin subfamily. Post-translationally, phosphorylated on some or all of the serine and threonine residues present in the C-terminal region.

Its subcellular location is the cell projection. The protein localises to the rhabdomere membrane. Visual pigments are the light-absorbing molecules that mediate vision. They consist of an apoprotein, opsin, covalently linked to cis-retinal. This is Opsin Rh1 (NINAE) from Calliphora vicina (Blue blowfly).